Consider the following 369-residue polypeptide: Molybdenum import ATP-binding protein ModC (369 aa).

The ABC transporter domain maps to Pro7–Asp243. Residue Gly41–Thr48 participates in ATP binding. The Mop domain occupies Glu304 to Ala369.

It belongs to the ABC transporter superfamily. Molybdate importer (TC 3.A.1.8) family. In terms of assembly, the complex is composed of two ATP-binding proteins (ModC), two transmembrane proteins (ModB) and a solute-binding protein (ModA).

The protein localises to the cell inner membrane. It catalyses the reaction molybdate(out) + ATP + H2O = molybdate(in) + ADP + phosphate + H(+). Part of the ABC transporter complex ModABC involved in molybdenum import. Responsible for energy coupling to the transport system. In Bordetella pertussis (strain Tohama I / ATCC BAA-589 / NCTC 13251), this protein is Molybdenum import ATP-binding protein ModC.